The following is a 242-amino-acid chain: Protein fmp-52, mitochondrial (242 aa).

A mitochondrion-targeting transit peptide spans 1 to 87; that stretch reads MSTSTPTSTA…VISSLGTTRV (87 aa). Positions 33-58 are disordered; sequence SSQVQTISRRAPANPTNSSRLSPTVN. The span at 35 to 58 shows a compositional bias: polar residues; it reads QVQTISRRAPANPTNSSRLSPTVN.

It belongs to the FMP52 family.

It is found in the mitochondrion outer membrane. This chain is Protein fmp-52, mitochondrial (fmp-52), found in Neurospora crassa (strain ATCC 24698 / 74-OR23-1A / CBS 708.71 / DSM 1257 / FGSC 987).